Consider the following 230-residue polypeptide: Large ribosomal subunit protein uL1 (230 aa).

The protein belongs to the universal ribosomal protein uL1 family. In terms of assembly, part of the 50S ribosomal subunit.

In terms of biological role, binds directly to 23S rRNA. The L1 stalk is quite mobile in the ribosome, and is involved in E site tRNA release. Protein L1 is also a translational repressor protein, it controls the translation of the L11 operon by binding to its mRNA. The chain is Large ribosomal subunit protein uL1 from Leptospira borgpetersenii serovar Hardjo-bovis (strain L550).